A 535-amino-acid chain; its full sequence is Phosphoenolpyruvate carboxykinase (ATP) (535 aa).

Substrate is bound by residues Arg59, Tyr201, and Lys207. ATP-binding positions include Lys207, His226, and 243–251; that span reads GLSGTGKTT. 2 residues coordinate Mn(2+): Lys207 and His226. Asp264 provides a ligand contact to Mn(2+). Residues Glu292, Arg328, 444–445, and Thr450 contribute to the ATP site; that span reads RI. A substrate-binding site is contributed by Arg328.

The protein belongs to the phosphoenolpyruvate carboxykinase (ATP) family. The cofactor is Mn(2+).

The protein localises to the cytoplasm. It catalyses the reaction oxaloacetate + ATP = phosphoenolpyruvate + ADP + CO2. It participates in carbohydrate biosynthesis; gluconeogenesis. Involved in the gluconeogenesis. Catalyzes the conversion of oxaloacetate (OAA) to phosphoenolpyruvate (PEP) through direct phosphoryl transfer between the nucleoside triphosphate and OAA. The protein is Phosphoenolpyruvate carboxykinase (ATP) of Porphyromonas gingivalis (strain ATCC BAA-308 / W83).